The chain runs to 441 residues: GTPase Der (441 aa).

EngA-type G domains are found at residues 4-168 and 177-352; these read PVVA…PEDI and IRIA…EQNS. Residues 10–17, 57–61, 121–124, 183–190, 230–234, and 295–298 each bind GTP; these read GRPNVGKS, DTGGI, NKVE, DTAGM, and NKWD. The KH-like domain maps to 353-437; sequence TRVATATLNT…PIRMIVRQKD (85 aa).

The protein belongs to the TRAFAC class TrmE-Era-EngA-EngB-Septin-like GTPase superfamily. EngA (Der) GTPase family. Associates with the 50S ribosomal subunit.

Functionally, GTPase that plays an essential role in the late steps of ribosome biogenesis. In Desulfitobacterium hafniense (strain DSM 10664 / DCB-2), this protein is GTPase Der.